Reading from the N-terminus, the 1002-residue chain is Isoleucine--tRNA ligase (1002 aa).

The short motif at 70 to 80 (PYANGNIHIGH) is the 'HIGH' region element. Glu630 contributes to the L-isoleucyl-5'-AMP binding site. A 'KMSKS' region motif is present at residues 671–675 (KMSKS). Lys674 contacts ATP.

The protein belongs to the class-I aminoacyl-tRNA synthetase family. IleS type 1 subfamily. In terms of assembly, monomer.

The protein localises to the cytoplasm. The enzyme catalyses tRNA(Ile) + L-isoleucine + ATP = L-isoleucyl-tRNA(Ile) + AMP + diphosphate. Its function is as follows. Catalyzes the attachment of isoleucine to tRNA(Ile). As IleRS can inadvertently accommodate and process structurally similar amino acids such as valine, to avoid such errors it has two additional distinct tRNA(Ile)-dependent editing activities. One activity is designated as 'pretransfer' editing and involves the hydrolysis of activated Val-AMP. The other activity is designated 'posttransfer' editing and involves deacylation of mischarged Val-tRNA(Ile). This chain is Isoleucine--tRNA ligase, found in Bradyrhizobium diazoefficiens (strain JCM 10833 / BCRC 13528 / IAM 13628 / NBRC 14792 / USDA 110).